The following is a 113-amino-acid chain: U11-theraphotoxin-Hhn1n (113 aa).

An N-terminal signal peptide occupies residues Met-1–Ala-21. A propeptide spanning residues Asp-22–Arg-74 is cleaved from the precursor. Basic and acidic residues predominate over residues Leu-60–Asn-69. Residues Leu-60 to Asp-83 form a disordered region. Disulfide bonds link Cys-75–Cys-90 and Cys-89–Cys-110.

It belongs to the neurotoxin 14 (magi-1) family. 01 (HNTX-16) subfamily. In terms of tissue distribution, expressed by the venom gland.

It is found in the secreted. Its function is as follows. Probable ion channel inhibitor. This chain is U11-theraphotoxin-Hhn1n, found in Cyriopagopus hainanus (Chinese bird spider).